Reading from the N-terminus, the 203-residue chain is Large ribosomal subunit protein uL22 (203 aa).

Polar residues-rich tracts occupy residues 116-126 and 134-167; these read QNGGESQNQEY and VSKS…DSQL. The tract at residues 116–203 is disordered; sequence QNGGESQNQE…TVLAQEKEVK (88 aa). Over residues 168–194 the composition is skewed to low complexity; sequence SAKTNSTTTAKKTDLADNNTKNDATNT.

The protein belongs to the universal ribosomal protein uL22 family. Part of the 50S ribosomal subunit.

In terms of biological role, this protein binds specifically to 23S rRNA; its binding is stimulated by other ribosomal proteins, e.g. L4, L17, and L20. It is important during the early stages of 50S assembly. It makes multiple contacts with different domains of the 23S rRNA in the assembled 50S subunit and ribosome. Functionally, the globular domain of the protein is located near the polypeptide exit tunnel on the outside of the subunit, while an extended beta-hairpin is found that lines the wall of the exit tunnel in the center of the 70S ribosome. The protein is Large ribosomal subunit protein uL22 of Mesomycoplasma hyopneumoniae (strain 232) (Mycoplasma hyopneumoniae).